The chain runs to 73 residues: Small ribosomal subunit protein uS15c (73 aa).

The protein belongs to the universal ribosomal protein uS15 family. Part of the 30S ribosomal subunit.

The protein resides in the plastid. It is found in the chloroplast. The polypeptide is Small ribosomal subunit protein uS15c (rps15) (Welwitschia mirabilis (Tree tumbo)).